Reading from the N-terminus, the 759-residue chain is Tripartite motif-containing protein 46 (759 aa).

A required for proximal axon localization, axon formation and migration region spans residues 1 to 166; it reads MAEGEDMQTF…VERYRQSVSV (166 aa). The RING-type 1; degenerate zinc-finger motif lies at 33-59; it reads CPVCQEMYKQPLVLPCTHNVCQACARE. A disordered region spans residues 67-98; sequence IGHGGDPSSEPTSPASTPSTRSPRLSRRTLPK. Over residues 73-89 the composition is skewed to low complexity; sequence PSSEPTSPASTPSTRSP. An RING-type 2; degenerate zinc finger spans residues 172-231; the sequence is CQLCKPPPLEATKGCSECRATFCNECFKLFHPWGTQKAQHEPTLPTLSFRPKGLMCPDHK. A B box-type zinc finger spans residues 222–263; sequence PKGLMCPDHKEEVTHYCKTCQRLVCQLCRVRRTHSGHKITPV. Residues C227, H230, C249, and H255 each coordinate Zn(2+). A coiled-coil region spans residues 294 to 400; sequence ELEETIRHTE…RATEALQTFR (107 aa). S330 bears the Phosphoserine mark. In terms of domain architecture, COS spans 370 to 427; sequence LKETDQPCFVQAAKQLHNRIARATEALQTFRPAASSSFRHCQLDVGREMKLLTELNFL. Residues 411 to 429 are required for microtubule association, proximal axon localization and axon formation; it reads QLDVGREMKLLTELNFLRV. One can recognise a Fibronectin type-III domain in the interval 429–528; sequence VPEAPVIDTQ…EDVHLHTPPA (100 aa). The B30.2/SPRY domain occupies 513 to 747; it reads GYGEYSEDVH…LQEPVGTKPE (235 aa). S627 bears the Phosphoserine mark.

It belongs to the TRIM/RBCC family. Interacts with TUBB3 and TUBA4A. In terms of tissue distribution, expressed in primary hippocampal and cortical neurons.

It localises to the cell projection. The protein localises to the axon. Its subcellular location is the cytoplasm. The protein resides in the cytoskeleton. In terms of biological role, microtubule-associated protein that is involved in the formation of parallel microtubule bundles linked by cross-bridges in the proximal axon. Required for the uniform orientation and maintenance of the parallel microtubule fascicles, which are important for efficient cargo delivery and trafficking in axons. Thereby also required for proper axon specification, the establishment of neuronal polarity and proper neuronal migration. The sequence is that of Tripartite motif-containing protein 46 from Rattus norvegicus (Rat).